Consider the following 506-residue polypeptide: Cytochrome P450 52B1 (506 aa).

Cys451 provides a ligand contact to heme.

The protein belongs to the cytochrome P450 family. Heme serves as cofactor.

Functionally, together with an NADPH cytochrome P450 the enzyme system catalyzes the terminal hydroxylation as the first step in the assimilation of alkanes and fatty acids. The protein is Cytochrome P450 52B1 (CYP52B1) of Candida tropicalis (Yeast).